Reading from the N-terminus, the 225-residue chain is Orotate phosphoribosyltransferase (225 aa).

5-phospho-alpha-D-ribose 1-diphosphate-binding positions include Lys-26, 73–74 (YK), Arg-100, Lys-101, Lys-104, His-106, and 127–135 (EDVTTAGTS). Residues Thr-131 and Arg-160 each coordinate orotate.

The protein belongs to the purine/pyrimidine phosphoribosyltransferase family. PyrE subfamily. Homodimer. Mg(2+) serves as cofactor.

The catalysed reaction is orotidine 5'-phosphate + diphosphate = orotate + 5-phospho-alpha-D-ribose 1-diphosphate. It functions in the pathway pyrimidine metabolism; UMP biosynthesis via de novo pathway; UMP from orotate: step 1/2. Catalyzes the transfer of a ribosyl phosphate group from 5-phosphoribose 1-diphosphate to orotate, leading to the formation of orotidine monophosphate (OMP). The polypeptide is Orotate phosphoribosyltransferase (Lachnoclostridium phytofermentans (strain ATCC 700394 / DSM 18823 / ISDg) (Clostridium phytofermentans)).